Here is a 267-residue protein sequence, read N- to C-terminus: tRNA-cytidine(32) 2-sulfurtransferase 1 (267 aa).

The PP-loop motif signature appears at Ser-42–Ser-47. Residues Cys-117, Cys-120, and Cys-208 each contribute to the [4Fe-4S] cluster site.

This sequence belongs to the TtcA family. Homodimer. It depends on Mg(2+) as a cofactor. [4Fe-4S] cluster is required as a cofactor.

Its subcellular location is the cytoplasm. It carries out the reaction cytidine(32) in tRNA + S-sulfanyl-L-cysteinyl-[cysteine desulfurase] + AH2 + ATP = 2-thiocytidine(32) in tRNA + L-cysteinyl-[cysteine desulfurase] + A + AMP + diphosphate + H(+). Its pathway is tRNA modification. Functionally, catalyzes the ATP-dependent 2-thiolation of cytidine in position 32 of tRNA, to form 2-thiocytidine (s(2)C32). The sulfur atoms are provided by the cysteine/cysteine desulfurase (IscS) system. The protein is tRNA-cytidine(32) 2-sulfurtransferase 1 of Francisella tularensis subsp. tularensis (strain FSC 198).